Here is a 46-residue protein sequence, read N- to C-terminus: Defensin Tk-AMP-D6 (46 aa).

Intrachain disulfides connect Cys3-Cys46, Cys14-Cys34, Cys20-Cys40, and Cys24-Cys42.

In terms of biological role, plant defense peptide. The sequence is that of Defensin Tk-AMP-D6 from Triticum kiharae (Wheat).